The following is a 222-amino-acid chain: Peptide methionine sulfoxide reductase MsrA 2 (222 aa).

Cysteine 56 is an active-site residue.

The protein belongs to the MsrA Met sulfoxide reductase family.

It catalyses the reaction L-methionyl-[protein] + [thioredoxin]-disulfide + H2O = L-methionyl-(S)-S-oxide-[protein] + [thioredoxin]-dithiol. It carries out the reaction [thioredoxin]-disulfide + L-methionine + H2O = L-methionine (S)-S-oxide + [thioredoxin]-dithiol. Its function is as follows. Has an important function as a repair enzyme for proteins that have been inactivated by oxidation. Catalyzes the reversible oxidation-reduction of methionine sulfoxide in proteins to methionine. In Nostoc sp. (strain PCC 7120 / SAG 25.82 / UTEX 2576), this protein is Peptide methionine sulfoxide reductase MsrA 2 (msrA2).